Here is a 504-residue protein sequence, read N- to C-terminus: Hydroxyisobutyraldehyde dehydrogenase (504 aa).

E260 functions as the Proton acceptor in the catalytic mechanism. Catalysis depends on C294, which acts as the Nucleophile.

It belongs to the aldehyde dehydrogenase family.

It is found in the cytoplasm. The enzyme catalyses 2-hydroxy-2-methylpropanal + NAD(+) + H2O = 2-hydroxy-2-methylpropanoate + NADH + 2 H(+). Involved in the degradation of methyl tert-butyl ether (MTBE). Catalyzes the conversion of hydroxyisobutyraldehyde to hydroxyisobutyric acid (HIBA). The protein is Hydroxyisobutyraldehyde dehydrogenase of Mycolicibacterium austroafricanum (Mycobacterium austroafricanum).